Consider the following 33-residue polypeptide: Beta-theraphotoxin-Cm1b (33 aa).

Intrachain disulfides connect cysteine 2/cysteine 17, cysteine 9/cysteine 22, and cysteine 16/cysteine 29. Leucine 33 carries the leucine amide modification.

It belongs to the neurotoxin 10 (Hwtx-1) family. 04 (CcoTx1) subfamily. As to expression, expressed by the venom gland.

It is found in the secreted. Functionally, inhibits several voltage-gated sodium channels and only one voltage-gated calcium channel (Cav2.2/CACNA1B (IC(50)=1.1 uM) and Nav1.2/SCN2A (IC(50)=3.7-80 nM), Nav1.3/SCN3A (IC(50)=88-5570 nM), Nav1.1/SCN1A (IC(50)=170-407 nM), Nav1.7/SCN9A (IC(50)=95.5-230 nM), Nav1.6/SCN6A (IC(50)=49.9-3990 nM), Nav1.4/SCN4A (IC(50)=113-400 nM or &gt;10 uM), Nav1.5/SCN5A (IC(50)=1524-1634 nM or &gt;10 uM)). The toxin acts by shifting the voltage dependence of channel activation to more depolarized potentials and by blocking the inward component of the sodium current. It shows moderate affinity for lipid bilayers without cholesterol and high affinity for lipid bilayers containing cholesterol. In vivo, this toxin causes general ataxia, lack of response to stimuli, and semiparalysis. After a few minutes, the mice are unable to stand, and breathing is reduced in rhythm and intensity. Symptoms gradually increase with progressive slowing of breathing and flaccid paralysis; death occurred within 10 to 20 minutes post injection. Animals remain totally flaccid, and no symptoms of excitatory neurotoxicity are observed. The polypeptide is Beta-theraphotoxin-Cm1b (Ceratogyrus marshalli (Straighthorned baboon tarantula)).